The following is a 610-amino-acid chain: Glutamine--fructose-6-phosphate aminotransferase [isomerizing] (610 aa).

The active-site Nucleophile; for GATase activity is the Cys-2. The Glutamine amidotransferase type-2 domain occupies 2–219 (CGIVGATSER…EGDVADINRT (218 aa)). SIS domains lie at 287–427 (AADI…YRGM) and 459–600 (LAQD…VDQP). The active-site For Fru-6P isomerization activity is Lys-605.

As to quaternary structure, homodimer.

The protein resides in the cytoplasm. It carries out the reaction D-fructose 6-phosphate + L-glutamine = D-glucosamine 6-phosphate + L-glutamate. Functionally, catalyzes the first step in hexosamine metabolism, converting fructose-6P into glucosamine-6P using glutamine as a nitrogen source. This Idiomarina loihiensis (strain ATCC BAA-735 / DSM 15497 / L2-TR) protein is Glutamine--fructose-6-phosphate aminotransferase [isomerizing].